We begin with the raw amino-acid sequence, 146 residues long: Lysozyme C-2 (146 aa).

A signal peptide spans 1–18 (MKTLLVLALLLLSVSVQA). Residues 19–146 (KVYDRCEFAR…VSQYIRGCKL (128 aa)) enclose the C-type lysozyme domain. Disulfide bonds link cysteine 24-cysteine 144, cysteine 48-cysteine 132, cysteine 81-cysteine 97, and cysteine 93-cysteine 111. Residues glutamate 53 and aspartate 69 contribute to the active site.

This sequence belongs to the glycosyl hydrolase 22 family. Monomer.

It is found in the secreted. It carries out the reaction Hydrolysis of (1-&gt;4)-beta-linkages between N-acetylmuramic acid and N-acetyl-D-glucosamine residues in a peptidoglycan and between N-acetyl-D-glucosamine residues in chitodextrins.. Its function is as follows. Lysozymes have primarily a bacteriolytic function; those in tissues and body fluids are associated with the monocyte-macrophage system and enhance the activity of immunoagents. This chain is Lysozyme C-2, found in Sus scrofa (Pig).